The following is a 298-amino-acid chain: Junctional adhesion molecule A (298 aa).

The first 28 residues, 1-28, serve as a signal peptide directing secretion; sequence MGTEARAGRRQLLVFTSVVLSSLALGRG. 2 consecutive Ig-like V-type domains span residues 29-126 and 134-227; these read AVYT…VQLT and PTVH…EAVR. Residues 29–237 lie on the Extracellular side of the membrane; the sequence is AVYTSEPDVR…MEAAELNVGG (209 aa). Intrachain disulfides connect Cys-49/Cys-108 and Cys-152/Cys-211. N-linked (GlcNAc...) asparagine glycosylation occurs at Asn-184. Residues 238 to 258 form a helical membrane-spanning segment; the sequence is IVAAVLVTLILLGFLILGIWF. Topologically, residues 259–298 are cytoplasmic; that stretch reads AYRRGYFDRTKKGTSSKKVIYSQPAARSEGEFRQTSSFLV. A phosphoserine mark is found at Ser-280 and Ser-286.

Belongs to the immunoglobulin superfamily. In terms of assembly, interacts with the ninth PDZ domain of MPDZ. Interacts with the first PDZ domain of PARD3. The association between PARD3 and PARD6B probably disrupts this interaction. Interacts with ITGAL (via I-domain). Interacts with CD151. (Microbial infection) Interacts with calicivirus capsid protein. As to quaternary structure, (Microbial infection) Interacts with the orthoreovirus sigma-1 capsid protein.

Its subcellular location is the cell junction. It localises to the tight junction. It is found in the cell membrane. Its function is as follows. Seems to play a role in epithelial tight junction formation. Appears early in primordial forms of cell junctions and recruits PARD3. The association of the PARD6-PARD3 complex may prevent the interaction of PARD3 with JAM1, thereby preventing tight junction assembly. Plays a role in regulating monocyte transmigration involved in integrity of epithelial barrier. Ligand for integrin alpha-L/beta-2 involved in memory T-cell and neutrophil transmigration. Involved in platelet activation. (Microbial infection) Acts as a functional receptor for murine norovirus. Functionally, (Microbial infection) In case of orthoreovirus infection, serves as receptor for the virus. This is Junctional adhesion molecule A (F11R) from Felis catus (Cat).